The primary structure comprises 193 residues: uncharacterized protein (193 aa).

The N-terminal stretch at 1 to 22 is a signal peptide; that stretch reads MAVQKNVIKGILAGTFALMLSG. The N-palmitoyl cysteine moiety is linked to residue Cys23. The S-diacylglycerol cysteine moiety is linked to residue Cys23.

It localises to the cell membrane. This is an uncharacterized protein from Escherichia coli (strain K12).